The following is a 141-amino-acid chain: Hemoglobin subunit alpha (141 aa).

The Globin domain occupies 1–141; the sequence is VLSPDDKKHV…VSTVLTSKYR (141 aa). Ser3 carries the phosphoserine modification. N6-succinyllysine occurs at positions 7 and 11. Lys16 is modified (N6-acetyllysine; alternate). Residue Lys16 is modified to N6-succinyllysine; alternate. Tyr24 carries the phosphotyrosine modification. Ser35 bears the Phosphoserine mark. At Lys40 the chain carries N6-succinyllysine. Position 49 is a phosphoserine (Ser49). His58 contributes to the O2 binding site. Heme b is bound at residue His87. Phosphoserine is present on Ser102. The residue at position 108 (Thr108) is a Phosphothreonine. Ser124 and Ser131 each carry phosphoserine. 2 positions are modified to phosphothreonine: Thr134 and Thr137. A Phosphoserine modification is found at Ser138.

It belongs to the globin family. In terms of assembly, heterotetramer of two alpha chains and two beta chains. Red blood cells.

Involved in oxygen transport from the lung to the various peripheral tissues. In terms of biological role, hemopressin acts as an antagonist peptide of the cannabinoid receptor CNR1. Hemopressin-binding efficiently blocks cannabinoid receptor CNR1 and subsequent signaling. In Cercocebus atys (Sooty mangabey), this protein is Hemoglobin subunit alpha (HBA).